A 328-amino-acid chain; its full sequence is DNA repair and recombination protein RadA (328 aa).

118–125 lines the ATP pocket; that stretch reads GEYGSGKT.

It belongs to the eukaryotic RecA-like protein family.

In terms of biological role, involved in DNA repair and in homologous recombination. Binds and assemble on single-stranded DNA to form a nucleoprotein filament. Hydrolyzes ATP in a ssDNA-dependent manner and promotes DNA strand exchange between homologous DNA molecules. This chain is DNA repair and recombination protein RadA, found in Desulfurococcus amylolyticus (strain DSM 18924 / JCM 16383 / VKM B-2413 / 1221n) (Desulfurococcus kamchatkensis).